Here is a 230-residue protein sequence, read N- to C-terminus: Protein GrpE (230 aa).

Disordered stretches follow at residues M1–A26 and G209–A230. Polar residues predominate over residues N221–A230.

It belongs to the GrpE family. As to quaternary structure, homodimer.

Its subcellular location is the cytoplasm. Participates actively in the response to hyperosmotic and heat shock by preventing the aggregation of stress-denatured proteins, in association with DnaK and GrpE. It is the nucleotide exchange factor for DnaK and may function as a thermosensor. Unfolded proteins bind initially to DnaJ; upon interaction with the DnaJ-bound protein, DnaK hydrolyzes its bound ATP, resulting in the formation of a stable complex. GrpE releases ADP from DnaK; ATP binding to DnaK triggers the release of the substrate protein, thus completing the reaction cycle. Several rounds of ATP-dependent interactions between DnaJ, DnaK and GrpE are required for fully efficient folding. The polypeptide is Protein GrpE (Brucella suis biovar 1 (strain 1330)).